A 553-amino-acid chain; its full sequence is Putative transport protein CKO_00031 (553 aa).

Transmembrane regions (helical) follow at residues 4–24 (IALT…IGNI), 28–48 (GVGF…HFVD), 65–85 (FGLI…FFAS), 95–115 (LFAI…HKIF), and 158–178 (MSYA…MWLM). RCK C-terminal domains are found at residues 192–276 (QHED…VIGQ) and 279–361 (DTSL…VVGN). Helical transmembrane passes span 371–391 (MLPV…PLFV), 393–413 (GFPV…ALIL), 437–457 (LGIV…FIDT), 464–484 (LSWI…VGLL), 493–513 (YLTL…LAFA), and 533–553 (LVMF…WGLG).

This sequence belongs to the AAE transporter (TC 2.A.81) family. YidE subfamily.

The protein resides in the cell membrane. The polypeptide is Putative transport protein CKO_00031 (Citrobacter koseri (strain ATCC BAA-895 / CDC 4225-83 / SGSC4696)).